A 359-amino-acid chain; its full sequence is Outer membrane protein P2 (359 aa).

The N-terminal stretch at 1 to 20 (MKKTLAALIVGAFAASAANA) is a signal peptide.

It belongs to the Gram-negative porin family. In terms of assembly, homotrimer.

Its subcellular location is the cell outer membrane. In terms of biological role, forms pores that allow passive diffusion of small molecules across the outer membrane. The sequence is that of Outer membrane protein P2 (ompP2) from Haemophilus influenzae (strain ATCC 51907 / DSM 11121 / KW20 / Rd).